Consider the following 120-residue polypeptide: Large ribosomal subunit protein bL19 (120 aa).

It belongs to the bacterial ribosomal protein bL19 family.

Its function is as follows. This protein is located at the 30S-50S ribosomal subunit interface and may play a role in the structure and function of the aminoacyl-tRNA binding site. This chain is Large ribosomal subunit protein bL19, found in Nostoc punctiforme (strain ATCC 29133 / PCC 73102).